Here is a 295-residue protein sequence, read N- to C-terminus: Bifunctional protein FolD (295 aa).

Residues 166-168 (GRS), serine 191, and isoleucine 232 contribute to the NADP(+) site.

The protein belongs to the tetrahydrofolate dehydrogenase/cyclohydrolase family. Homodimer.

It carries out the reaction (6R)-5,10-methylene-5,6,7,8-tetrahydrofolate + NADP(+) = (6R)-5,10-methenyltetrahydrofolate + NADPH. The catalysed reaction is (6R)-5,10-methenyltetrahydrofolate + H2O = (6R)-10-formyltetrahydrofolate + H(+). Its pathway is one-carbon metabolism; tetrahydrofolate interconversion. Its function is as follows. Catalyzes the oxidation of 5,10-methylenetetrahydrofolate to 5,10-methenyltetrahydrofolate and then the hydrolysis of 5,10-methenyltetrahydrofolate to 10-formyltetrahydrofolate. This is Bifunctional protein FolD from Rhodopseudomonas palustris (strain BisA53).